The primary structure comprises 294 residues: Bifunctional protein FolD 1 (294 aa).

Residues 165–167, serine 190, and threonine 231 contribute to the NADP(+) site; that span reads GRS.

The protein belongs to the tetrahydrofolate dehydrogenase/cyclohydrolase family. As to quaternary structure, homodimer.

The enzyme catalyses (6R)-5,10-methylene-5,6,7,8-tetrahydrofolate + NADP(+) = (6R)-5,10-methenyltetrahydrofolate + NADPH. It carries out the reaction (6R)-5,10-methenyltetrahydrofolate + H2O = (6R)-10-formyltetrahydrofolate + H(+). It functions in the pathway one-carbon metabolism; tetrahydrofolate interconversion. Catalyzes the oxidation of 5,10-methylenetetrahydrofolate to 5,10-methenyltetrahydrofolate and then the hydrolysis of 5,10-methenyltetrahydrofolate to 10-formyltetrahydrofolate. The sequence is that of Bifunctional protein FolD 1 from Paenarthrobacter aurescens (strain TC1).